Reading from the N-terminus, the 162-residue chain is Iron-sulfur cluster assembly protein IscU (162 aa).

It belongs to the NifU family. As to quaternary structure, homotrimer. Small proportion is monomeric. Interacts with IscS. Interacts with ABCB6. Component of a complex, at least composed of IscS, Isd11 and IscU. [4Fe-4S] cluster is required as a cofactor.

It localises to the mitochondrion. It functions in the pathway cofactor biosynthesis; iron-sulfur cluster biosynthesis. Participates in iron-sulfur cluster formation (ISC) pathway for iron-sulfur (Fe-S) cluster biogenesis. Plays a role of a major scaffold protein for [Fe-S] assembly; assembles [4Fe-4S] clusters directly upon interaction with the catalytic component IscS-Isd11 as part of the scaffold complex. Can transfer [4Fe-4S] clusters to target apo-proteins. The chain is Iron-sulfur cluster assembly protein IscU from Plasmodium falciparum (isolate 3D7).